We begin with the raw amino-acid sequence, 84 residues long: Toxin NvePTx1 (84 aa).

Residues Met-1–Ala-21 form the signal peptide. Residues Ser-22 to Arg-34 constitute a propeptide that is removed on maturation.

This sequence belongs to the sea anemone type 5 potassium channel toxin family. Post-translationally, contains 4 disulfide bonds. In unfertilized eggs and early post-fertilization stages, is expressed uniformly. In gastrulae, the expression becomes spatially-localized and seems to be absent from the oral and aboral poles. In planulae, the expression is clearly observed in the ectoderm in packed gland cells absent from the two body poles, and upon metamorphosis, the expression diminishes. There is two types of gland cells, one large and elongated and another small and round. This toxin is maternally deposited at both protein and RNA levels.

Its subcellular location is the secreted. The protein resides in the nematocyst. Functionally, neurotoxin that is probably only defensive. Acts as a voltage-gated potassium channel (Kv) inhibitor. In vivo, induces a rapid increase in swimming speed on zebrafish larvae, as well as death which occurs between 2 and 18 hours later. This chain is Toxin NvePTx1, found in Nematostella vectensis (Starlet sea anemone).